The following is a 208-amino-acid chain: MSETGATPTAARTARMERTTSESSVLVEINLDGSGVSDISTSVPFYDHMLTALCKHSLIDMTVKATGDTHIDAHHTVEDVAITFGEVLRQALGNKAGIRRFGEATVPLDEALAHAVVDVSGRPYLVHGGEPAGQEYHLIGGHFTGSLTRHVFEAITLHAGICLHMNVLAGRDPHHIVEAQFKAFARALRAAVESDPRVEGIPSTKGAL.

It belongs to the imidazoleglycerol-phosphate dehydratase family.

Its subcellular location is the cytoplasm. It carries out the reaction D-erythro-1-(imidazol-4-yl)glycerol 3-phosphate = 3-(imidazol-4-yl)-2-oxopropyl phosphate + H2O. The protein operates within amino-acid biosynthesis; L-histidine biosynthesis; L-histidine from 5-phospho-alpha-D-ribose 1-diphosphate: step 6/9. This is Imidazoleglycerol-phosphate dehydratase from Paenarthrobacter aurescens (strain TC1).